The following is a 95-amino-acid chain: Aspartyl/glutamyl-tRNA(Asn/Gln) amidotransferase subunit C (95 aa).

This sequence belongs to the GatC family. Heterotrimer of A, B and C subunits.

It catalyses the reaction L-glutamyl-tRNA(Gln) + L-glutamine + ATP + H2O = L-glutaminyl-tRNA(Gln) + L-glutamate + ADP + phosphate + H(+). The enzyme catalyses L-aspartyl-tRNA(Asn) + L-glutamine + ATP + H2O = L-asparaginyl-tRNA(Asn) + L-glutamate + ADP + phosphate + 2 H(+). Functionally, allows the formation of correctly charged Asn-tRNA(Asn) or Gln-tRNA(Gln) through the transamidation of misacylated Asp-tRNA(Asn) or Glu-tRNA(Gln) in organisms which lack either or both of asparaginyl-tRNA or glutaminyl-tRNA synthetases. The reaction takes place in the presence of glutamine and ATP through an activated phospho-Asp-tRNA(Asn) or phospho-Glu-tRNA(Gln). The chain is Aspartyl/glutamyl-tRNA(Asn/Gln) amidotransferase subunit C from Rhizobium rhizogenes (strain K84 / ATCC BAA-868) (Agrobacterium radiobacter).